A 436-amino-acid polypeptide reads, in one-letter code: GTPase Der (436 aa).

2 EngA-type G domains span residues 4–167 (PVIA…PKIE) and 176–351 (IRFS…ESHS). Residues 10 to 17 (GRPNVGKS), 57 to 61 (DTGGI), 119 to 122 (NKVD), 182 to 189 (GRPNVGKS), 229 to 233 (DTAGM), and 294 to 297 (NKWD) contribute to the GTP site. Positions 352–436 (IRVQTNVLND…PIHIIARARD (85 aa)) constitute a KH-like domain.

It belongs to the TRAFAC class TrmE-Era-EngA-EngB-Septin-like GTPase superfamily. EngA (Der) GTPase family. In terms of assembly, associates with the 50S ribosomal subunit.

Functionally, GTPase that plays an essential role in the late steps of ribosome biogenesis. In Bacillus cereus (strain G9842), this protein is GTPase Der.